A 199-amino-acid polypeptide reads, in one-letter code: dITP/XTP pyrophosphatase (199 aa).

Residue 8–13 participates in substrate binding; sequence TSNINK. Asp-68 (proton acceptor) is an active-site residue. A Mg(2+)-binding site is contributed by Asp-68. Substrate is bound by residues Ser-69, 155–158, Lys-177, and 182–183; these read FGYD and HR.

It belongs to the HAM1 NTPase family. As to quaternary structure, homodimer. The cofactor is Mg(2+).

It carries out the reaction XTP + H2O = XMP + diphosphate + H(+). The catalysed reaction is dITP + H2O = dIMP + diphosphate + H(+). The enzyme catalyses ITP + H2O = IMP + diphosphate + H(+). Its function is as follows. Pyrophosphatase that catalyzes the hydrolysis of nucleoside triphosphates to their monophosphate derivatives, with a high preference for the non-canonical purine nucleotides XTP (xanthosine triphosphate), dITP (deoxyinosine triphosphate) and ITP. Seems to function as a house-cleaning enzyme that removes non-canonical purine nucleotides from the nucleotide pool, thus preventing their incorporation into DNA/RNA and avoiding chromosomal lesions. In Borrelia duttonii (strain Ly), this protein is dITP/XTP pyrophosphatase.